We begin with the raw amino-acid sequence, 354 residues long: Sorbitol dehydrogenase (354 aa).

Cys43 is a Zn(2+) binding site. A substrate-binding site is contributed by Tyr49. Positions 67 and 68 each coordinate Zn(2+). Residue Glu153 participates in substrate binding. 3 residues coordinate NAD(+): Ile181, Asp201, and Arg206. Residues Ser208 and Ser222 each carry the phosphoserine modification. NAD(+) contacts are provided by residues 270 to 272 (VGL) and 294 to 296 (VFR). Arg296 and Tyr297 together coordinate substrate.

This sequence belongs to the zinc-containing alcohol dehydrogenase family. In terms of assembly, homotetramer. Zn(2+) serves as cofactor. In terms of tissue distribution, expressed in liver.

The protein resides in the mitochondrion membrane. Its subcellular location is the cell projection. It localises to the cilium. It is found in the flagellum. The catalysed reaction is xylitol + NAD(+) = D-xylulose + NADH + H(+). It carries out the reaction L-iditol + NAD(+) = keto-L-sorbose + NADH + H(+). It catalyses the reaction keto-D-fructose + NADH + H(+) = D-sorbitol + NAD(+). In terms of biological role, polyol dehydrogenase that catalyzes the reversible NAD(+)-dependent oxidation of various sugar alcohols. Is mostly active with xylitol, L-iditol and D-sorbitol (D-glucitol) as substrates, leading to the C2-oxidized products D-xylulose, L-sorbose and D-fructose, respectively. Is a key enzyme in the polyol pathway that interconverts glucose and fructose via sorbitol, which constitutes an important alternate route for glucose metabolism. May play a role in sperm motility by using sorbitol as an alternative energy source for sperm motility. The protein is Sorbitol dehydrogenase (SORD) of Ovis aries (Sheep).